We begin with the raw amino-acid sequence, 379 residues long: Transcription factor bHLH122 (379 aa).

Over residues 1 to 17 the composition is skewed to basic and acidic residues; it reads MESEFQQHHFLLHDHQH. Positions 1–21 are disordered; it reads MESEFQQHHFLLHDHQHQRPR. Ser74 carries the phosphoserine modification. Disordered stretches follow at residues 79-98, 133-156, and 190-286; these read TFNSDGTEKKPPEVKTEDED, SVSRNKRPREKDDRTPVNNLARHN, and TSNT…MSLP. Positions 84–93 are enriched in basic and acidic residues; it reads GTEKKPPEVK. The span at 190–200 shows a compositional bias: polar residues; that stretch reads TSNTEASSLTP. 2 positions are modified to phosphoserine: Ser213 and Ser234. Residues 235-261 are compositionally biased toward polar residues; it reads GGFNRSFGNEGSASSKLTALARTQSGG. Positions 265-274 are enriched in basic and acidic residues; the sequence is YKTKDEDSAS. Residues 310–360 enclose the bHLH domain; sequence CATHPRSIAERVRRTKISERMRKLQDLVPNMDTQTNTADMLDLAVQYIKDL.

As to quaternary structure, homodimer.

The protein localises to the nucleus. In Arabidopsis thaliana (Mouse-ear cress), this protein is Transcription factor bHLH122 (BHLH122).